The sequence spans 473 residues: Photosystem II CP43 reaction center protein (473 aa).

Positions 1 to 14 are excised as a propeptide; it reads MKTLYSLRRFYHVE. Thr-15 carries the N-acetylthreonine modification. At Thr-15 the chain carries Phosphothreonine. 5 consecutive transmembrane segments (helical) span residues 69-93, 134-155, 178-200, 255-275, and 291-312; these read LFEV…PHLA, LLGP…KDRN, KALY…RKIT, KPFA…LSYS, and WFNN…ASQA. [CaMn4O5] cluster is bound at residue Glu-367. The helical transmembrane segment at 447–471 threads the bilayer; sequence RARAAAAGFEKGIDRDFEPVLSMTP.

It belongs to the PsbB/PsbC family. PsbC subfamily. PSII is composed of 1 copy each of membrane proteins PsbA, PsbB, PsbC, PsbD, PsbE, PsbF, PsbH, PsbI, PsbJ, PsbK, PsbL, PsbM, PsbT, PsbX, PsbY, PsbZ, Psb30/Ycf12, at least 3 peripheral proteins of the oxygen-evolving complex and a large number of cofactors. It forms dimeric complexes. Binds multiple chlorophylls and provides some of the ligands for the Ca-4Mn-5O cluster of the oxygen-evolving complex. It may also provide a ligand for a Cl- that is required for oxygen evolution. PSII binds additional chlorophylls, carotenoids and specific lipids. serves as cofactor.

The protein localises to the plastid. The protein resides in the chloroplast thylakoid membrane. In terms of biological role, one of the components of the core complex of photosystem II (PSII). It binds chlorophyll and helps catalyze the primary light-induced photochemical processes of PSII. PSII is a light-driven water:plastoquinone oxidoreductase, using light energy to abstract electrons from H(2)O, generating O(2) and a proton gradient subsequently used for ATP formation. This is Photosystem II CP43 reaction center protein from Crucihimalaya wallichii (Rock-cress).